The chain runs to 175 residues: uncharacterized protein (175 aa).

A signal peptide spans 1-22 (MNRIVGILISILMLACIGVTMA).

This is an uncharacterized protein from Archaeoglobus fulgidus (strain ATCC 49558 / DSM 4304 / JCM 9628 / NBRC 100126 / VC-16).